We begin with the raw amino-acid sequence, 179 residues long: MGSEAAQLLEAADFAARKHRQQRRKDPEGTPYINHPIGVARILTHEAGITDIVVLQAALLHDTVEDTDTTLDEVELHFGAQVRRLVEEVTDDKTLPKLERKRLQVEQAPHSSPGAKLVKLADKLYNLRDLNRCTPEGWSEHRVQEYFEWAAQVVKGLQGTNRQLEEALKHLFKQRGLTI.

At G2 the chain carries N-acetylglycine. K25 carries the post-translational modification N6-acetyllysine. One can recognise an HD domain in the interval 32-127; it reads YINHPIGVAR…VKLADKLYNL (96 aa). Mn(2+)-binding residues include H35, H61, and D62. Active-site nucleophile residues include E65 and D66. K97 bears the N6-acetyllysine mark. Residue D122 participates in Mn(2+) binding. An N6-acetyllysine modification is found at K123.

It belongs to the MESH1 family. Mn(2+) is required as a cofactor.

The catalysed reaction is guanosine 3',5'-bis(diphosphate) + H2O = GDP + diphosphate + H(+). PpGpp hydrolyzing enzyme involved in starvation response. The polypeptide is Guanosine-3',5'-bis(diphosphate) 3'-pyrophosphohydrolase MESH1 (HDDC3) (Homo sapiens (Human)).